The following is a 206-amino-acid chain: dCTP deaminase, dUMP-forming (206 aa).

Residues 117-122, aspartate 135, 143-145, glutamine 163, tyrosine 177, lysine 184, and glutamine 188 each bind dCTP; these read RSSFGR and TLE. The active-site Proton donor/acceptor is the glutamate 145.

This sequence belongs to the dCTP deaminase family. In terms of assembly, homotrimer.

The catalysed reaction is dCTP + 2 H2O = dUMP + NH4(+) + diphosphate. It functions in the pathway pyrimidine metabolism; dUMP biosynthesis; dUMP from dCTP: step 1/1. Functionally, bifunctional enzyme that catalyzes both the deamination of dCTP to dUTP and the hydrolysis of dUTP to dUMP without releasing the toxic dUTP intermediate. This Methanococcus maripaludis (strain C7 / ATCC BAA-1331) protein is dCTP deaminase, dUMP-forming.